Reading from the N-terminus, the 683-residue chain is Rhophilin-2-A (683 aa).

The REM-1 domain occupies 25–99 (KSIAQTGRSK…LERLNISVEV (75 aa)). In terms of domain architecture, BRO1 spans 110–501 (PLIPLGLKET…TDIFQRLGPL (392 aa)). Residues 515–592 (KICITKEDGD…QSIEIQVISI (78 aa)) enclose the PDZ domain.

This sequence belongs to the RHPN family. Interacts with RhoA.

It is found in the cytoplasm. It localises to the perinuclear region. In terms of biological role, binds specifically to GTP-Rho. The chain is Rhophilin-2-A (rhpn2-a) from Xenopus laevis (African clawed frog).